Consider the following 78-residue polypeptide: Short neurotoxin OH-5 (78 aa).

The first 21 residues, 1–21, serve as a signal peptide directing secretion; that stretch reads MKNLLLTFLVVTIVCLDLGYT. Disulfide bonds link Cys24–Cys40, Cys33–Cys58, Cys62–Cys70, and Cys71–Cys76.

It belongs to the three-finger toxin family. Short-chain subfamily. In terms of tissue distribution, expressed by the venom gland.

The protein localises to the secreted. Its function is as follows. This three-finger toxin binds and inhibits the nicotinic acetylcholine receptor (nAChR). This Ophiophagus hannah (King cobra) protein is Short neurotoxin OH-5.